The following is a 529-amino-acid chain: Bifunctional purine biosynthesis protein PurH (529 aa).

The MGS-like domain occupies 1-148 (MQQRRPIRRA…KNHKDVAIVV (148 aa)).

This sequence belongs to the PurH family.

The enzyme catalyses (6R)-10-formyltetrahydrofolate + 5-amino-1-(5-phospho-beta-D-ribosyl)imidazole-4-carboxamide = 5-formamido-1-(5-phospho-D-ribosyl)imidazole-4-carboxamide + (6S)-5,6,7,8-tetrahydrofolate. The catalysed reaction is IMP + H2O = 5-formamido-1-(5-phospho-D-ribosyl)imidazole-4-carboxamide. It functions in the pathway purine metabolism; IMP biosynthesis via de novo pathway; 5-formamido-1-(5-phospho-D-ribosyl)imidazole-4-carboxamide from 5-amino-1-(5-phospho-D-ribosyl)imidazole-4-carboxamide (10-formyl THF route): step 1/1. It participates in purine metabolism; IMP biosynthesis via de novo pathway; IMP from 5-formamido-1-(5-phospho-D-ribosyl)imidazole-4-carboxamide: step 1/1. The chain is Bifunctional purine biosynthesis protein PurH from Yersinia pseudotuberculosis serotype IB (strain PB1/+).